A 389-amino-acid chain; its full sequence is Dual-specificity RNA methyltransferase RlmN (389 aa).

Residue E94 is the Proton acceptor of the active site. The Radical SAM core domain occupies 134 to 367; sequence PRVRVTQCIS…CFVRRRRGDD (234 aa). Residues C141 and C372 are joined by a disulfide bond. The [4Fe-4S] cluster site is built by C148, C152, and C155. S-adenosyl-L-methionine contacts are provided by residues 197-198, S229, 253-255, and N329; these read GE and SLH. The S-methylcysteine intermediate role is filled by C372.

Belongs to the radical SAM superfamily. RlmN family. It depends on [4Fe-4S] cluster as a cofactor.

It localises to the cytoplasm. It catalyses the reaction adenosine(2503) in 23S rRNA + 2 reduced [2Fe-2S]-[ferredoxin] + 2 S-adenosyl-L-methionine = 2-methyladenosine(2503) in 23S rRNA + 5'-deoxyadenosine + L-methionine + 2 oxidized [2Fe-2S]-[ferredoxin] + S-adenosyl-L-homocysteine. It carries out the reaction adenosine(37) in tRNA + 2 reduced [2Fe-2S]-[ferredoxin] + 2 S-adenosyl-L-methionine = 2-methyladenosine(37) in tRNA + 5'-deoxyadenosine + L-methionine + 2 oxidized [2Fe-2S]-[ferredoxin] + S-adenosyl-L-homocysteine. Specifically methylates position 2 of adenine 2503 in 23S rRNA and position 2 of adenine 37 in tRNAs. m2A2503 modification seems to play a crucial role in the proofreading step occurring at the peptidyl transferase center and thus would serve to optimize ribosomal fidelity. The polypeptide is Dual-specificity RNA methyltransferase RlmN (Sorangium cellulosum (strain So ce56) (Polyangium cellulosum (strain So ce56))).